We begin with the raw amino-acid sequence, 123 residues long: Putative iron-sulfur cluster insertion protein ErpA (123 aa).

3 residues coordinate iron-sulfur cluster: cysteine 51, cysteine 115, and cysteine 117.

This sequence belongs to the HesB/IscA family. As to quaternary structure, homodimer. Iron-sulfur cluster serves as cofactor.

Required for insertion of 4Fe-4S clusters. In Bordetella avium (strain 197N), this protein is Putative iron-sulfur cluster insertion protein ErpA.